The chain runs to 112 residues: Conotoxin vil14.5 (112 aa).

The N-terminal stretch at M1–S22 is a signal peptide. Positions E23–R85 are excised as a propeptide. Residues R53 to P74 are disordered. Residues R62–P74 show a composition bias toward basic and acidic residues. Cystine bridges form between C91/C111 and C95/C107.

The protein belongs to the conotoxin R superfamily. Expressed by the venom duct.

It is found in the secreted. This Conus villepinii (Villepin's cone) protein is Conotoxin vil14.5.